We begin with the raw amino-acid sequence, 182 residues long: Dual-action ribosomal maturation protein DarP (182 aa).

Residues 1 to 20 (MNKQPEEWQDPQSLQQQDDE) are disordered.

The protein belongs to the DarP family.

The protein localises to the cytoplasm. Functionally, member of a network of 50S ribosomal subunit biogenesis factors which assembles along the 30S-50S interface, preventing incorrect 23S rRNA structures from forming. Promotes peptidyl transferase center (PTC) maturation. The polypeptide is Dual-action ribosomal maturation protein DarP (Sodalis glossinidius (strain morsitans)).